Consider the following 319-residue polypeptide: ATP-dependent 6-phosphofructokinase (319 aa).

Residue Gly11 coordinates ATP. ADP is bound at residue Arg21–Arg25. ATP contacts are provided by residues Arg72–Tyr73 and Gly102–Ser105. Position 103 (Asp103) interacts with Mg(2+). Thr125–Asp127 contacts substrate. The active-site Proton acceptor is Asp127. Residue Arg154 participates in ADP binding. Substrate-binding positions include Arg162 and Met169 to Arg171. ADP contacts are provided by residues Gly185–Glu187 and Arg211. Substrate-binding positions include Glu222, Arg243, and His249–Arg252.

The protein belongs to the phosphofructokinase type A (PFKA) family. ATP-dependent PFK group I subfamily. Prokaryotic clade 'B1' sub-subfamily. Homotetramer. Requires Mg(2+) as cofactor.

The protein resides in the cytoplasm. It carries out the reaction beta-D-fructose 6-phosphate + ATP = beta-D-fructose 1,6-bisphosphate + ADP + H(+). It participates in carbohydrate degradation; glycolysis; D-glyceraldehyde 3-phosphate and glycerone phosphate from D-glucose: step 3/4. Allosterically activated by ADP and other diphosphonucleosides, and allosterically inhibited by phosphoenolpyruvate. Catalyzes the phosphorylation of D-fructose 6-phosphate to fructose 1,6-bisphosphate by ATP, the first committing step of glycolysis. The polypeptide is ATP-dependent 6-phosphofructokinase (Lacticaseibacillus casei (strain BL23) (Lactobacillus casei)).